The primary structure comprises 138 residues: CLAVATA3/ESR (CLE)-related protein 2 (138 aa).

An N-terminal signal peptide occupies residues 1–22 (MPNIFKILLIVLLAVVSFRLSA). The segment at 23–90 (STGDKKTAND…VPSHVTNRSM (68 aa)) is required for secretion from the host cytoplasm to the host apoplasm. Residues Asn-37, Asn-87, and Asn-123 are each glycosylated (N-linked (GlcNAc...) asparagine). Disordered stretches follow at residues 66-97 (AIGR…PPPV) and 116-138 (LAEK…PHHH). The CLE signature appears at 127–138 (RLSPSGPDPHHH).

It belongs to the CLV3/ESR signal peptide family. Highly expressed exclusively within the dorsal esophageal gland cell during syncytium formation in host plants (at protein level).

Its subcellular location is the secreted. The protein resides in the host cytoplasm. It localises to the host extracellular space. The protein localises to the extracellular space. It is found in the apoplast. Its function is as follows. Mimics host plant CLE extracellular signal peptides that regulate cell fate. May play a role in the differentiation or division of feeding cells (syncytia) induced in plant roots during infection. This chain is CLAVATA3/ESR (CLE)-related protein 2 (CLE2), found in Heterodera glycines (Soybean cyst nematode worm).